Reading from the N-terminus, the 130-residue chain is Histone H2A type 1-F (130 aa).

The tract at residues 1-22 (MSGRGKQGGKARAKAKTRSSRA) is disordered. S2 bears the Phosphoserine; by RPS6KA5 mark. At R4 the chain carries Citrulline; alternate. At R4 the chain carries Symmetric dimethylarginine; by PRMT5; alternate. Residues K6 and K10 each carry the N6-(2-hydroxyisobutyryl)lysine modification. Basic residues predominate over residues 7–19 (QGGKARAKAKTRS). The residue at position 10 (K10) is an N6-lactoyllysine; alternate. K37 carries the N6-(2-hydroxyisobutyryl)lysine; alternate modification. K37 bears the N6-(beta-hydroxybutyryl)lysine; alternate mark. K37 is subject to N6-crotonyllysine; alternate. N6-(2-hydroxyisobutyryl)lysine is present on residues K75, K76, and K96. K96 is modified (N6-glutaryllysine; alternate). Residue Q105 is modified to N5-methylglutamine. An N6-(2-hydroxyisobutyryl)lysine; alternate modification is found at K119. N6-crotonyllysine; alternate is present on residues K119 and K120. 2 positions are modified to N6-glutaryllysine; alternate: K119 and K120. Residue K120 forms a Glycyl lysine isopeptide (Lys-Gly) (interchain with G-Cter in ubiquitin); alternate linkage. A Phosphothreonine; by DCAF1 modification is found at T121. K126 bears the N6-crotonyllysine; alternate mark. Position 126 is an N6-glutaryllysine; alternate (K126).

The protein belongs to the histone H2A family. In terms of assembly, the nucleosome is a histone octamer containing two molecules each of H2A, H2B, H3 and H4 assembled in one H3-H4 heterotetramer and two H2A-H2B heterodimers. The octamer wraps approximately 147 bp of DNA. Post-translationally, deiminated on Arg-4 in granulocytes upon calcium entry. Monoubiquitination of Lys-120 (H2AK119Ub) by RING1, TRIM37 and RNF2/RING2 complex gives a specific tag for epigenetic transcriptional repression and participates in X chromosome inactivation of female mammals. It is involved in the initiation of both imprinted and random X inactivation. Ubiquitinated H2A is enriched in inactive X chromosome chromatin. Ubiquitination of H2A functions downstream of methylation of 'Lys-27' of histone H3 (H3K27me). H2AK119Ub by RNF2/RING2 can also be induced by ultraviolet and may be involved in DNA repair. Following DNA double-strand breaks (DSBs), it is ubiquitinated through 'Lys-63' linkage of ubiquitin moieties by the E2 ligase UBE2N and the E3 ligases RNF8 and RNF168, leading to the recruitment of repair proteins to sites of DNA damage. Ubiquitination at Lys-14 and Lys-16 (H2AK13Ub and H2AK15Ub, respectively) in response to DNA damage is initiated by RNF168 that mediates monoubiquitination at these 2 sites, and 'Lys-63'-linked ubiquitin are then conjugated to monoubiquitin; RNF8 is able to extend 'Lys-63'-linked ubiquitin chains in vitro. H2AK119Ub and ionizing radiation-induced 'Lys-63'-linked ubiquitination (H2AK13Ub and H2AK15Ub) are distinct events. In terms of processing, phosphorylation on Ser-2 (H2AS1ph) is enhanced during mitosis. Phosphorylation on Ser-2 by RPS6KA5/MSK1 directly represses transcription. Acetylation of H3 inhibits Ser-2 phosphorylation by RPS6KA5/MSK1. Phosphorylation at Thr-121 (H2AT120ph) by DCAF1 is present in the regulatory region of many tumor suppresor genes and down-regulates their transcription. Post-translationally, symmetric dimethylation on Arg-4 by the PRDM1/PRMT5 complex may play a crucial role in the germ-cell lineage. Glutamine methylation at Gln-105 (H2AQ104me) by FBL is specifically dedicated to polymerase I. It is present at 35S ribosomal DNA locus and impairs binding of the FACT complex. In terms of processing, crotonylation (Kcr) is specifically present in male germ cells and marks testis-specific genes in post-meiotic cells, including X-linked genes that escape sex chromosome inactivation in haploid cells. Crotonylation marks active promoters and enhancers and confers resistance to transcriptional repressors. It is also associated with post-meiotically activated genes on autosomes. Post-translationally, lactylated in macrophages by EP300/P300 by using lactoyl-CoA directly derived from endogenous or exogenous lactate, leading to stimulates gene transcription.

The protein localises to the nucleus. It localises to the chromosome. Its function is as follows. Core component of nucleosome. Nucleosomes wrap and compact DNA into chromatin, limiting DNA accessibility to the cellular machineries which require DNA as a template. Histones thereby play a central role in transcription regulation, DNA repair, DNA replication and chromosomal stability. DNA accessibility is regulated via a complex set of post-translational modifications of histones, also called histone code, and nucleosome remodeling. In Rattus norvegicus (Rat), this protein is Histone H2A type 1-F.